Consider the following 313-residue polypeptide: Monoglyceride lipase (313 aa).

The GXSXG signature appears at 121-125; it reads GHSMG. The Nucleophile role is filled by Ser123. Catalysis depends on charge relay system residues Asp251 and His281.

It belongs to the AB hydrolase superfamily. Monoacylglycerol lipase family.

It is found in the lipid droplet. Its subcellular location is the cytoplasm. It localises to the endoplasmic reticulum. The protein resides in the mitochondrion outer membrane. The enzyme catalyses Hydrolyzes glycerol monoesters of long-chain fatty acids.. The catalysed reaction is a fatty acid ethyl ester + H2O = ethanol + a fatty acid + H(+). It carries out the reaction 1-(9Z-octadecenoyl)-glycerol + H2O = glycerol + (9Z)-octadecenoate + H(+). It catalyses the reaction 2-(9Z-octadecenoyl)-glycerol + H2O = glycerol + (9Z)-octadecenoate + H(+). The enzyme catalyses 1-hexadecanoylglycerol + H2O = glycerol + hexadecanoate + H(+). The catalysed reaction is 2-hexadecanoylglycerol + H2O = glycerol + hexadecanoate + H(+). It carries out the reaction ethyl hexadecanoate + H2O = ethanol + hexadecanoate + H(+). It catalyses the reaction ethyl (9Z)-octadecenoate + H2O = ethanol + (9Z)-octadecenoate + H(+). The enzyme catalyses ethyl (9Z)-hexadecenoate + H2O = (9Z)-hexadecenoate + ethanol + H(+). The catalysed reaction is ethyl octadecanoate + H2O = ethanol + octadecanoate + H(+). The protein operates within glycerolipid metabolism; triacylglycerol degradation. Functionally, converts monoacylglycerides (MAG) to free fatty acids and glycerol. Has a strong preference for monounsaturated monoglycerides. Required for efficient degradation of MAG, short-lived intermediates of glycerolipid metabolism which may also function as lipid signaling molecules. Controls inactivation of the signaling lipid N-palmitoylethanolamine (PEA). Involved in fatty acid ethyl ester (FAEE) catabolism. FAEEs are non-oxidative metabolites of ethanol that are transiently incorporated into lipid droplets (LDs). Their mobilization by LD-resident FAEE hydrolases facilitates a controlled metabolism of these potentially toxic lipid metabolites. The chain is Monoglyceride lipase (YJU3) from Saccharomyces cerevisiae (strain ATCC 204508 / S288c) (Baker's yeast).